A 234-amino-acid chain; its full sequence is Probable chemoreceptor glutamine deamidase CheD 1 (234 aa).

Positions 183-234 are disordered; it reads AREAAGPRGERAARARPRVELFGTPAPKAQATPRIELFGTRATQPATRKQEA. Residues 190–201 are compositionally biased toward basic and acidic residues; that stretch reads RGERAARARPRV. The span at 223-234 shows a compositional bias: polar residues; that stretch reads RATQPATRKQEA.

Belongs to the CheD family.

It catalyses the reaction L-glutaminyl-[protein] + H2O = L-glutamyl-[protein] + NH4(+). In terms of biological role, probably deamidates glutamine residues to glutamate on methyl-accepting chemotaxis receptors (MCPs), playing an important role in chemotaxis. The chain is Probable chemoreceptor glutamine deamidase CheD 1 from Burkholderia thailandensis (strain ATCC 700388 / DSM 13276 / CCUG 48851 / CIP 106301 / E264).